The chain runs to 1199 residues: RNA-binding protein 20 (1199 aa).

3 disordered regions span residues 1–55, 163–186, and 320–346; these read MVLA…PQAS, PSTAIAFSPPSQTGGPGPSVSLPS, and ERPPGFSGQNKPDITAGPSLWAPPASQ. Residues 25–42 are compositionally biased toward low complexity; the sequence is VMPGVQGPSVPQGQQGMQ. Over residues 43-52 the composition is skewed to pro residues; it reads PLPPPPPPQP. The segment covering 170 to 183 has biased composition (low complexity); the sequence is SPPSQTGGPGPSVS. The U1-type zinc finger occupies 410 to 444; that stretch reads HLPHICSICDKKVFDLKDWELHVKGKLHAQKCLLF. The RRM domain occupies 520–595; it reads RVVHICNLPE…EKLLIRMSTR (76 aa). The segment covering 626–636 has biased composition (basic and acidic residues); that stretch reads EADRYGPERPR. 3 disordered regions span residues 626 to 685, 720 to 884, and 944 to 1077; these read EADR…NGED, REKY…YPTN, and GETL…SQAC. An RS region spans residues 630 to 649; that stretch reads YGPERPRSRSPMSRSLSPRS. S637, S639, S642, S644, and S651 each carry phosphoserine. Residues 638–649 are compositionally biased toward low complexity; it reads RSPMSRSLSPRS. A compositionally biased stretch (basic and acidic residues) spans 667–685; the sequence is YAWRDEDRETVPRRENGED. At S728 the chain carries Phosphoserine. Composition is skewed to basic and acidic residues over residues 739 to 758, 770 to 831, and 859 to 868; these read KGREDGYHRKEPKAKLDKYP, RKEE…KESQ, and ENTRTKKGQD. S787 is subject to Phosphoserine. Phosphoserine is present on residues S871, S873, and S955. Residues 962–971 show a composition bias toward polar residues; sequence VPSTSASCPN. Phosphoserine is present on residues S991, S1026, S1038, S1049, S1054, S1058, S1070, S1088, and S1093. The span at 1042–1055 shows a compositional bias: basic and acidic residues; that stretch reads DDCKARGSPEDGSH. Polar residues predominate over residues 1067–1077; sequence PTESDLQSQAC. Residues 1133–1164 form a Matrin-type zinc finger; sequence FYCKLCGLFYTSEEAAKVSHCRSTVHYRNLQK. Positions 1172-1199 are disordered; the sequence is EGLKETEGTDSPSPERGGIGPHLERKKL. 2 positions are modified to phosphoserine: S1182 and S1184.

In terms of assembly, associates with components of the U1 and U2 U1 small nuclear ribonucleoprotein complexes. Phosphorylation regulates the subcellular localization. Phosphorylation of Ser-637 and Ser-639 in the RS (arginine/serine-rich) region promotes nuclear localization of the protein. In contrast, phosphorylation of the C-terminal disordered region promotes localization to cytoplasmic ribonucleoprotein granules. Predominantly expressed in striated muscle, with highest expression in the heart. In differentiating myoblasts, expression correlates with sarcomere assembly: expression peaks when alpha-actinin is localized mainly in mature Z bodies within the nascent myofiber and expression declines as the sarcomeres continue to mature. Also expressed in kidney.

The protein resides in the nucleus. It is found in the cytoplasm. It localises to the cytoplasmic ribonucleoprotein granule. RNA-binding protein that acts as a regulator of mRNA splicing of a subset of genes encoding key structural proteins involved in cardiac development, such as TTN (Titin), CACNA1C, CAMK2D or PDLIM5/ENH. Acts as a repressor of mRNA splicing: specifically binds the 5'UCUU-3' motif that is predominantly found within intronic sequences of pre-mRNAs, leading to the exclusion of specific exons in target transcripts. RBM20-mediated exon skipping is hormone-dependent and is essential for TTN isoform transition in both cardiac and skeletal muscles. RBM20-mediated exon skipping of TTN provides substrates for the formation of circular RNA (circRNAs) from the TTN transcripts. Together with RBM24, promotes the expression of short isoforms of PDLIM5/ENH in cardiomyocytes. The chain is RNA-binding protein 20 from Mus musculus (Mouse).